Reading from the N-terminus, the 165-residue chain is NADPH-dependent 7-cyano-7-deazaguanine reductase (165 aa).

Cysteine 56 (thioimide intermediate) is an active-site residue. Aspartate 63 (proton donor) is an active-site residue. Substrate contacts are provided by residues 78–80 (VES) and 97–98 (HE).

Belongs to the GTP cyclohydrolase I family. QueF type 1 subfamily.

It localises to the cytoplasm. The catalysed reaction is 7-aminomethyl-7-carbaguanine + 2 NADP(+) = 7-cyano-7-deazaguanine + 2 NADPH + 3 H(+). It participates in tRNA modification; tRNA-queuosine biosynthesis. Is totally inhibited by 4-aminobenzylcyanide in vitro. Its function is as follows. Catalyzes the NADPH-dependent reduction of 7-cyano-7-deazaguanine (preQ0) to 7-aminomethyl-7-deazaguanine (preQ1), a late step in the queuosine pathway. Is highly specific for its natural substrate preQ0, since it cannot use various aliphatic, aromatic and heterocyclic nitriles, although it can reduce the substrate analog 5-cyanopyrrolo[2,3-d]pyrimidin-4-one with lesser efficiency. This is NADPH-dependent 7-cyano-7-deazaguanine reductase from Geobacillus kaustophilus (strain HTA426).